The following is a 430-amino-acid chain: Long-chain specific acyl-CoA dehydrogenase, mitochondrial (430 aa).

The N-terminal 30 residues, 1–30 (MAARLLRGSLRVLGGHRAPRQLPAARCSHS), are a transit peptide targeting the mitochondrion. K42 is modified (N6-acetyllysine). S54 is subject to Phosphoserine. An N6-acetyllysine; alternate mark is found at K66 and K81. Residues K66 and K81 each carry the N6-succinyllysine; alternate modification. N6-acetyllysine is present on residues K92 and K95. At K165 the chain carries N6-succinyllysine. Residues 170–179 (IAMTEPGAGS) and 203–205 (FIS) each bind FAD. S179 is a substrate binding site. Residue 227–228 (AH) coordinates substrate. Position 240 is an N6-succinyllysine (K240). An N6-acetyllysine; alternate mark is found at K254 and K279. Residues K254 and K279 each carry the N6-succinyllysine; alternate modification. Residues Y282 and 289 to 292 (PQER) each bind substrate. The active-site Proton acceptor is E291. R317 contacts FAD. Residue K318 is modified to N6-acetyllysine. Residue K322 is modified to N6-acetyllysine; alternate. K322 carries the post-translational modification N6-succinyllysine; alternate. Q328 is a binding site for FAD. At K358 the chain carries N6-acetyllysine. S362 is modified (phosphoserine). 385-389 (QLHGG) is a binding site for FAD. 412–413 (GG) provides a ligand contact to substrate. 414–416 (TNE) contributes to the FAD binding site.

It belongs to the acyl-CoA dehydrogenase family. As to quaternary structure, homotetramer. It depends on FAD as a cofactor. Post-translationally, acetylation at Lys-318 and Lys-322 in proximity of the cofactor-binding sites strongly reduces catalytic activity. These sites are deacetylated by SIRT3.

It localises to the mitochondrion matrix. The enzyme catalyses a long-chain 2,3-saturated fatty acyl-CoA + oxidized [electron-transfer flavoprotein] + H(+) = a long-chain (2E)-enoyl-CoA + reduced [electron-transfer flavoprotein]. It catalyses the reaction hexanoyl-CoA + oxidized [electron-transfer flavoprotein] + H(+) = (2E)-hexenoyl-CoA + reduced [electron-transfer flavoprotein]. It carries out the reaction octanoyl-CoA + oxidized [electron-transfer flavoprotein] + H(+) = (2E)-octenoyl-CoA + reduced [electron-transfer flavoprotein]. The catalysed reaction is decanoyl-CoA + oxidized [electron-transfer flavoprotein] + H(+) = (2E)-decenoyl-CoA + reduced [electron-transfer flavoprotein]. The enzyme catalyses dodecanoyl-CoA + oxidized [electron-transfer flavoprotein] + H(+) = (2E)-dodecenoyl-CoA + reduced [electron-transfer flavoprotein]. It catalyses the reaction tetradecanoyl-CoA + oxidized [electron-transfer flavoprotein] + H(+) = (2E)-tetradecenoyl-CoA + reduced [electron-transfer flavoprotein]. It carries out the reaction oxidized [electron-transfer flavoprotein] + hexadecanoyl-CoA + H(+) = (2E)-hexadecenoyl-CoA + reduced [electron-transfer flavoprotein]. The catalysed reaction is octadecanoyl-CoA + oxidized [electron-transfer flavoprotein] + H(+) = (2E)-octadecenoyl-CoA + reduced [electron-transfer flavoprotein]. The enzyme catalyses eicosanoyl-CoA + oxidized [electron-transfer flavoprotein] + H(+) = (2E)-eicosenoyl-CoA + reduced [electron-transfer flavoprotein]. It catalyses the reaction docosanoyl-CoA + oxidized [electron-transfer flavoprotein] + H(+) = (2E)-docosenoyl-CoA + reduced [electron-transfer flavoprotein]. It carries out the reaction tetracosanoyl-CoA + oxidized [electron-transfer flavoprotein] + H(+) = (2E)-tetracosenoyl-CoA + reduced [electron-transfer flavoprotein]. The catalysed reaction is (5E)-tetradecenoyl-CoA + oxidized [electron-transfer flavoprotein] + H(+) = (2E,5E)-tetradecadienoyl-CoA + reduced [electron-transfer flavoprotein]. The enzyme catalyses (5Z)-tetradecenoyl-CoA + oxidized [electron-transfer flavoprotein] + H(+) = (2E,5Z)-tetradecadienoyl-CoA + reduced [electron-transfer flavoprotein]. It catalyses the reaction oxidized [electron-transfer flavoprotein] + (9Z)-octadecenoyl-CoA + H(+) = (2E,9Z)-octadecadienoyl-CoA + reduced [electron-transfer flavoprotein]. It functions in the pathway lipid metabolism; mitochondrial fatty acid beta-oxidation. Long-chain specific acyl-CoA dehydrogenase is one of the acyl-CoA dehydrogenases that catalyze the first step of mitochondrial fatty acid beta-oxidation, an aerobic process breaking down fatty acids into acetyl-CoA and allowing the production of energy from fats. The first step of fatty acid beta-oxidation consists in the removal of one hydrogen from C-2 and C-3 of the straight-chain fatty acyl-CoA thioester, resulting in the formation of trans-2-enoyl-CoA. Among the different mitochondrial acyl-CoA dehydrogenases, long-chain specific acyl-CoA dehydrogenase can act on saturated and unsaturated acyl-CoAs with 6 to 24 carbons with a preference for 8 to 18 carbons long primary chains. This Homo sapiens (Human) protein is Long-chain specific acyl-CoA dehydrogenase, mitochondrial.